We begin with the raw amino-acid sequence, 65 residues long: Large ribosomal subunit protein bL35 (65 aa).

Residues 1-26 form a disordered region; the sequence is MPKMKSNKGASKRFKKTASGGFKCKQ.

The protein belongs to the bacterial ribosomal protein bL35 family.

This is Large ribosomal subunit protein bL35 from Idiomarina loihiensis (strain ATCC BAA-735 / DSM 15497 / L2-TR).